We begin with the raw amino-acid sequence, 364 residues long: Programmed cell death protein 2-like (364 aa).

At Ala-2 the chain carries N-acetylalanine. The interval 125–150 (EGSQDWGSDTEETPPPPASDLGSDSN) is disordered.

Functionally, over-expression suppresses AP1, CREB, NFAT, and NF-kB transcriptional activation, and delays cell cycle progression at S phase. In Mus musculus (Mouse), this protein is Programmed cell death protein 2-like (Pdcd2l).